Consider the following 1893-residue polypeptide: Protein TIC 214 (1893 aa).

6 helical membrane passes run Ile-18–Gly-38, Ala-63–Leu-83, Leu-87–Trp-107, Leu-127–Leu-147, Val-175–Ile-195, and Ile-224–Ile-244. Basic and acidic residues-rich tracts occupy residues Met-249 to Arg-258 and Glu-268 to Glu-287. The tract at residues Met-249–Glu-317 is disordered. The segment covering Glu-298–Glu-309 has biased composition (acidic residues). Residues Leu-1126–Ile-1146 traverse the membrane as a helical segment.

It belongs to the TIC214 family. Part of the Tic complex.

Its subcellular location is the plastid. The protein resides in the chloroplast inner membrane. In terms of biological role, involved in protein precursor import into chloroplasts. May be part of an intermediate translocation complex acting as a protein-conducting channel at the inner envelope. This chain is Protein TIC 214, found in Vitis vinifera (Grape).